A 132-amino-acid polypeptide reads, in one-letter code: Small ribosomal subunit protein uS9 (132 aa).

The interval 103–132 is disordered; sequence NGLLTRDDRTKERKKPGLKRARKAPQYTKR. Residues 114 to 132 are compositionally biased toward basic residues; the sequence is ERKKPGLKRARKAPQYTKR.

This sequence belongs to the universal ribosomal protein uS9 family.

This Dehalococcoides mccartyi (strain CBDB1) protein is Small ribosomal subunit protein uS9.